The chain runs to 201 residues: NAD(P)H quinone oxidoreductase PST2 (201 aa).

One can recognise a Flavodoxin-like domain in the interval 6–192 (VAIIIYSLYH…SIAQQQGEDF (187 aa)). Residues 12-16 (SLYHH) and 112-164 (VFVS…SPWG) contribute to the FMN site.

It belongs to the WrbA family. The cofactor is FMN.

Its subcellular location is the cell membrane. The enzyme catalyses a quinone + NADH + H(+) = a quinol + NAD(+). It catalyses the reaction a quinone + NADPH + H(+) = a quinol + NADP(+). Functionally, flavodoxin-like protein (FLP) that plays a role in cell wall integrity, oxidative stress protection and virulence. FLPs act as NAD(P)H quinone oxidoreductases. Reduces ubiquinone (coenzyme Q), enabling it to serve as an antioxidant in the membrane. The polypeptide is NAD(P)H quinone oxidoreductase PST2 (Candida albicans (strain SC5314 / ATCC MYA-2876) (Yeast)).